Consider the following 665-residue polypeptide: Putative phospholipid:diacylglycerol acyltransferase 2 (665 aa).

Residues 48 to 68 (LIGYLCTAWWLLLFLYHSVPV) traverse the membrane as a helical segment. Catalysis depends on serine 237, which acts as the Acyl-ester intermediate. Catalysis depends on charge relay system residues aspartate 567 and histidine 620.

The protein belongs to the AB hydrolase superfamily. Lipase family.

The protein localises to the membrane. It carries out the reaction a glycerophospholipid + a 1,2-diacyl-sn-glycerol = a monoacylglycerophospholipid + a triacyl-sn-glycerol. The protein is Putative phospholipid:diacylglycerol acyltransferase 2 (PDAT2) of Arabidopsis thaliana (Mouse-ear cress).